Reading from the N-terminus, the 429-residue chain is Enolase (429 aa).

Residue Q163 participates in (2R)-2-phosphoglycerate binding. E205 functions as the Proton donor in the catalytic mechanism. Residues D242, E285, and D312 each contribute to the Mg(2+) site. (2R)-2-phosphoglycerate-binding residues include K337, R366, S367, and K388. K337 acts as the Proton acceptor in catalysis.

The protein belongs to the enolase family. Mg(2+) serves as cofactor.

Its subcellular location is the cytoplasm. The protein localises to the secreted. It is found in the cell surface. It catalyses the reaction (2R)-2-phosphoglycerate = phosphoenolpyruvate + H2O. It participates in carbohydrate degradation; glycolysis; pyruvate from D-glyceraldehyde 3-phosphate: step 4/5. Its function is as follows. Catalyzes the reversible conversion of 2-phosphoglycerate (2-PG) into phosphoenolpyruvate (PEP). It is essential for the degradation of carbohydrates via glycolysis. The protein is Enolase of Methylorubrum populi (strain ATCC BAA-705 / NCIMB 13946 / BJ001) (Methylobacterium populi).